The following is a 364-amino-acid chain: Uroporphyrinogen decarboxylase (364 aa).

Substrate contacts are provided by residues 49–53 (RQAGR), aspartate 98, tyrosine 173, serine 228, and histidine 341.

It belongs to the uroporphyrinogen decarboxylase family. Homodimer.

The protein resides in the cytoplasm. It catalyses the reaction uroporphyrinogen III + 4 H(+) = coproporphyrinogen III + 4 CO2. The protein operates within porphyrin-containing compound metabolism; protoporphyrin-IX biosynthesis; coproporphyrinogen-III from 5-aminolevulinate: step 4/4. Its function is as follows. Catalyzes the decarboxylation of four acetate groups of uroporphyrinogen-III to yield coproporphyrinogen-III. The sequence is that of Uroporphyrinogen decarboxylase from Protochlamydia amoebophila (strain UWE25).